The chain runs to 309 residues: HPr kinase/phosphorylase (309 aa).

Residues histidine 138 and lysine 159 contribute to the active site. Residue 153–160 coordinates ATP; it reads GDSGIGKS. Serine 160 is a Mg(2+) binding site. Aspartate 177 (proton acceptor; for phosphorylation activity. Proton donor; for dephosphorylation activity) is an active-site residue. The tract at residues 201-210 is important for the catalytic mechanism of both phosphorylation and dephosphorylation; sequence LEIRGVGIID. Glutamate 202 contacts Mg(2+). Residue arginine 243 is part of the active site. An important for the catalytic mechanism of dephosphorylation region spans residues 264–269; it reads PVKTGR.

Belongs to the HPrK/P family. In terms of assembly, homohexamer. It depends on Mg(2+) as a cofactor.

The catalysed reaction is [HPr protein]-L-serine + ATP = [HPr protein]-O-phospho-L-serine + ADP + H(+). The enzyme catalyses [HPr protein]-O-phospho-L-serine + phosphate + H(+) = [HPr protein]-L-serine + diphosphate. In terms of biological role, catalyzes the ATP- as well as the pyrophosphate-dependent phosphorylation of a specific serine residue in HPr, a phosphocarrier protein of the phosphoenolpyruvate-dependent sugar phosphotransferase system (PTS). HprK/P also catalyzes the pyrophosphate-producing, inorganic phosphate-dependent dephosphorylation (phosphorolysis) of seryl-phosphorylated HPr (P-Ser-HPr). The two antagonistic activities of HprK/P are regulated by several intracellular metabolites, which change their concentration in response to the absence or presence of rapidly metabolisable carbon sources (glucose, fructose, etc.) in the growth medium. Therefore, by controlling the phosphorylation state of HPr, HPrK/P is a sensor enzyme that plays a major role in the regulation of carbon metabolism and sugar transport: it mediates carbon catabolite repression (CCR), and regulates PTS-catalyzed carbohydrate uptake and inducer exclusion. The polypeptide is HPr kinase/phosphorylase (Streptococcus thermophilus (strain CNRZ 1066)).